Here is a 223-residue protein sequence, read N- to C-terminus: Glucosyl-3-phosphoglycerate phosphatase (223 aa).

Arg10 is a substrate binding site. The active-site Tele-phosphohistidine intermediate is His11. Lys47 is covalently cross-linked (Isoglutamyl lysine isopeptide (Lys-Gln) (interchain with Q-Cter in protein Pup)). Arg60 serves as a coordination point for substrate. Catalysis depends on Glu84, which acts as the Proton donor/acceptor. Residue His159 participates in substrate binding.

Belongs to the phosphoglycerate mutase family. Homodimer. Dimerization of the enzyme is essential for its dephosphorylation activity.

The enzyme catalyses (2R)-2-O-(alpha-D-glucopyranosyl)-3-phospho-glycerate + H2O = (2R)-2-O-(alpha-D-glucopyranosyl)-glycerate + phosphate. The catalysed reaction is 2-O-(alpha-D-mannosyl)-3-phosphoglycerate + H2O = (2R)-2-O-(alpha-D-mannosyl)-glycerate + phosphate. It carries out the reaction (2R)-2-O-[alpha-D-mannopyranosyl-(1-&gt;2)-alpha-D-glucopyranosyl]-3-phospho-glycerate + H2O = (2R)-2-O-[alpha-D-mannopyranosyl-(1-&gt;2)-alpha-D-glucopyranosyl]-glycerate + phosphate. Its activity is regulated as follows. Progressively inhibited by cobalt ions at concentrations between 10-50 mM and by copper ions at any concentration between 1-50 mM. Involved in the biosynthesis of mycobacterial methylglucose lipopolysaccharides (MGLPs). Catalyzes the dephosphorylation of glucosyl-3-phosphoglycerate (GPG) to glucosylglycerate (GG). GPG is the preferred substrate, but GpgP also exhibits low dephosphorylation activity on mannosyl-3-phosphoglycerate (MPG) and mannosylglucosyl-3-phosphoglycerate (MGPG) in vitro. Shows only trace of phosphoglycerate mutase (PGM) activity. The chain is Glucosyl-3-phosphoglycerate phosphatase from Mycobacterium tuberculosis (strain ATCC 25618 / H37Rv).